A 213-amino-acid polypeptide reads, in one-letter code: Orotate phosphoribosyltransferase (213 aa).

K26 contacts 5-phospho-alpha-D-ribose 1-diphosphate. 34-35 (FF) lines the orotate pocket. 5-phospho-alpha-D-ribose 1-diphosphate contacts are provided by residues 72–73 (YK), R99, K100, K103, H105, and 124–132 (DDVITAGTA). 2 residues coordinate orotate: T128 and R156.

It belongs to the purine/pyrimidine phosphoribosyltransferase family. PyrE subfamily. Homodimer. The cofactor is Mg(2+).

The enzyme catalyses orotidine 5'-phosphate + diphosphate = orotate + 5-phospho-alpha-D-ribose 1-diphosphate. Its pathway is pyrimidine metabolism; UMP biosynthesis via de novo pathway; UMP from orotate: step 1/2. In terms of biological role, catalyzes the transfer of a ribosyl phosphate group from 5-phosphoribose 1-diphosphate to orotate, leading to the formation of orotidine monophosphate (OMP). This chain is Orotate phosphoribosyltransferase, found in Pseudomonas putida (strain GB-1).